Consider the following 96-residue polypeptide: Beta-defensin 132 (96 aa).

The N-terminal stretch at 1 to 22 (MKFLLLVLAALRFLTQVIPASG) is a signal peptide. Disulfide bonds link C27–C55, C35–C49, and C39–C56. The segment at 74–96 (HWQSRRRNTQRKDKKQQTTVTSS) is disordered. Positions 76 to 87 (QSRRRNTQRKDK) are enriched in basic residues.

This sequence belongs to the beta-defensin family.

The protein resides in the secreted. Its function is as follows. Has antibacterial activity. In Hylobates lar (Lar gibbon), this protein is Beta-defensin 132 (DEFB132).